Consider the following 46-residue polypeptide: Photosystem II reaction center protein K (46 aa).

Residues 1 to 9 (MIDALVLVA) constitute a propeptide that is removed on maturation. Over 10–19 (KLPEAYAIFD) the chain is Lumenal. The chain crosses the membrane as a helical span at residues 20–39 (PLVDVLPVIPVLFLALAFVW). The Cytoplasmic segment spans residues 40-46 (QAAVGFR).

Belongs to the PsbK family. As to quaternary structure, PSII is composed of 1 copy each of membrane proteins PsbA, PsbB, PsbC, PsbD, PsbE, PsbF, PsbH, PsbI, PsbJ, PsbK, PsbL, PsbM, PsbT, PsbX, PsbY, PsbZ, Psb30/Ycf12, peripheral proteins PsbO, CyanoQ(PsbQ), PsbU, PsbV and a large number of cofactors. It forms dimeric complexes. Part of a photosystem II (PSII) assembly intermediate complex PSII-I; crystallized from a strain deleted of psbJ, it forms monomeric PSII before addition of the oxygen evolving complex. PSII-I includes 3 assembly factors not found in mature PSII (Psb27, Psb28 and Psb34). Requires PSII binds multiple chlorophylls, carotenoids and specific lipids. as cofactor.

The protein resides in the cellular thylakoid membrane. One of the components of the core complex of photosystem II (PSII). PSII is a light-driven water:plastoquinone oxidoreductase that uses light energy to abstract electrons from H(2)O, generating O(2) and a proton gradient subsequently used for ATP formation. It consists of a core antenna complex that captures photons, and an electron transfer chain that converts photonic excitation into a charge separation. Required for association of PsbZ and Psb30/Ycf12 with PSII. This is Photosystem II reaction center protein K from Thermosynechococcus vestitus (strain NIES-2133 / IAM M-273 / BP-1).